A 755-amino-acid chain; its full sequence is Serine/threonine-protein kinase GL21140 (755 aa).

Over residues 18–52 (QASASGSGTPKKTAASSAAAQNSKQLLDQLSQQQK) the composition is skewed to low complexity. Residues 18 to 128 (QASASGSGTP…GSANTNGSAS (111 aa)) are disordered. 2 stretches are compositionally biased toward basic and acidic residues: residues 53–66 (AQEEAETHSRRDCD) and 74–84 (EPEKDLDELRD). Over residues 87–99 (GSLTGSGSVGKSN) the composition is skewed to polar residues. Low complexity predominate over residues 100 to 128 (GSLSGASSTTSAPAGTSTPGSANTNGSAS). 2 Doublecortin domains span residues 157–243 (HRIK…VDYN) and 314–397 (RIVT…VDDF). A Protein kinase domain is found at 484 to 742 (YTLSQIIGDG…SEDILDHYWT (259 aa)). Residues 490 to 498 (IGDGNFAIV) and Lys513 each bind ATP. The Proton acceptor role is filled by Asp605.

It belongs to the protein kinase superfamily. CAMK Ser/Thr protein kinase family. CaMK subfamily.

It catalyses the reaction L-seryl-[protein] + ATP = O-phospho-L-seryl-[protein] + ADP + H(+). The enzyme catalyses L-threonyl-[protein] + ATP = O-phospho-L-threonyl-[protein] + ADP + H(+). The polypeptide is Serine/threonine-protein kinase GL21140 (Drosophila persimilis (Fruit fly)).